The primary structure comprises 512 residues: MATDIDMLIDLGLDLSDSELEEDALERDEEGRRDDPESDSSGECSSSDEDMEDPCGDGGAEAIDAAIPKGPPARPEDAGTPEASTPRPAARRGADDPPPATTGVWSRLGTRRSASPREPHGGKVARIQPPSTKAPHPRGGRRGRRRGRGRYGPGGADSTPKPRRRVSRNAHNQGGRHPASARTDGPGATHGEARRGGEQLDVSGGPRPRGTRQAPPPLMALSLTPPHADGRAPVPERKAPSADTIDPAVRAVLRSISERAAVERISESFGRSALVMQDPFGGMPFPAANSPWAPVLATQAGGFDAETRRVSWETLVAHGPSLYRTFAANPRAASTAKAMRDCVLRQENLIEALASADETLAWCKMCIHHNLPLRPQDPIIGTAAAVLENLATRLRPFLQCYLKARGLCGLDDLCSRRRLSDIKDIASFVLVILARLANRVERGVSEIDYTTVGVGAGETMHFYIPGACMAGLIEILDTHRQECSSRVCELTASHTIAPLYVHGKYFYCNSLF.

The interval 1 to 242 (MATDIDMLID…PVPERKAPSA (242 aa)) is disordered. The Nuclear export signal motif lies at 5-17 (IDMLIDLGLDLSD). 2 positions are modified to phosphoserine; by host: serine 16 and serine 18. Composition is skewed to acidic residues over residues 16 to 28 (SDSE…LERD) and 36 to 55 (PESD…EDPC). The interval 104 to 112 (VWSRLGTRR) is interaction with host ALYREF. The Nuclear localization signal signature appears at 110-138 (TRRSASPREPHGGKVARIQPPSTKAPHPR). Phosphoserine; by host is present on serine 113. Residues 135–149 (PHPRGGRRGRRRGRG) are compositionally biased toward basic residues. Position 138 is a dimethylated arginine; by host (arginine 138). The tract at residues 138-152 (RGGRRGRRRGRGRYG) is RGG-box. Omega-N-methylarginine; by host is present on arginine 148. Arginine 150 carries the post-translational modification Dimethylated arginine; by host. Basic and acidic residues predominate over residues 228–240 (ADGRAPVPERKAP). Cysteine 400, histidine 479, cysteine 483, and cysteine 488 together coordinate Zn(2+). The segment at 400 to 488 (CYLKARGLCG…HRQECSSRVC (89 aa)) adopts a CHC2-type zinc-finger fold.

It belongs to the HHV-1 ICP27 protein family. Interacts with host RBP1; this interaction facilitates the RNA polymerase recruitment to viral transcription sites. Interacts (via the RGG box) with host ALYREF/THOC4; this interaction recruits ALYREF to viral replication compartments and probably directs viral mRNA to the TAP/NFX1 pathway. Interacts (via the RGG box) with host SRPK1; this interaction relocalizes SRPK1 to the nucleus and seems to alter its activity. Interacts with ICP4; this interaction modulates ICP4 DNA-binding activity. Interacts with host NXF1; this interaction allows efficient export of HSV-1 early and late transcripts. Interacts with host IRF3; this interaction inhibits IRF3 phosphorylation and nuclear translocation. Methylated within the RGG box possibly by host PRMT1. When hypomethylated, ICP27 is exported to the cytoplasm earlier and more rapidly. In terms of processing, phosphorylated.

The protein localises to the host cytoplasm. The protein resides in the host nucleus. In terms of biological role, multifunctional regulator of the expression of viral genes that contributes to the shutoff of host protein synthesis and mediates nuclear export of viral intronless mRNAs. Also stimulates translation of viral transcripts. Independently, plays a role in the regulation of virion release. Also plays a role in the inhibition of host innate immune response by targeting host IRF3 and thereby preventing production of beta-interferon. Silences the 3' splice site of the host promyelocytic leukemia (PML) intron 7a, thereby switching PML isoforms from PML-II to PML-V. This could be linked to the accelerated mRNA export induced by ICP27 which might not provide sufficient time for PML pre-mRNA to be spliced in the nucleus. Also suppresses splicing of the viral ICP34.5 mRNA, allowing the virus to express a variant form of ICP34.5. This is mRNA export factor from Human herpesvirus 2 (strain HG52) (HHV-2).